Reading from the N-terminus, the 454-residue chain is Chromosomal replication initiator protein DnaA (454 aa).

Residues 1 to 74 (MFDLDKFWQF…IQEAYAYADM (74 aa)) form a domain I, interacts with DnaA modulators region. The segment at 74 to 116 (MEIQPKFEVAGKEGPERLVTPQPRIKTNQEILENRRDEFAQDL) is domain II. The interval 117-333 (QLNSKYTFDT…GALVKVQAHA (217 aa)) is domain III, AAA+ region. Residues glycine 161, glycine 163, lysine 164, and threonine 165 each coordinate ATP. The segment at 334 to 454 (TIEREDINVD…VYDLKAMLEH (121 aa)) is domain IV, binds dsDNA.

This sequence belongs to the DnaA family. In terms of assembly, oligomerizes as a right-handed, spiral filament on DNA at oriC.

Its subcellular location is the cytoplasm. In terms of biological role, plays an essential role in the initiation and regulation of chromosomal replication. ATP-DnaA binds to the origin of replication (oriC) to initiate formation of the DNA replication initiation complex once per cell cycle. Binds the DnaA box (a 9 base pair repeat at the origin) and separates the double-stranded (ds)DNA. Forms a right-handed helical filament on oriC DNA; dsDNA binds to the exterior of the filament while single-stranded (ss)DNA is stabiized in the filament's interior. The ATP-DnaA-oriC complex binds and stabilizes one strand of the AT-rich DNA unwinding element (DUE), permitting loading of DNA polymerase. After initiation quickly degrades to an ADP-DnaA complex that is not apt for DNA replication. Binds acidic phospholipids. This chain is Chromosomal replication initiator protein DnaA, found in Lactobacillus johnsonii (strain CNCM I-12250 / La1 / NCC 533).